We begin with the raw amino-acid sequence, 154 residues long: uncharacterized protein (154 aa).

2 consecutive transmembrane segments (helical) span residues 19–39 and 51–71; these read LFAY…GLLL and ADQV…LLFA.

Its subcellular location is the cell membrane. This is an uncharacterized protein from Mycobacterium tuberculosis (strain CDC 1551 / Oshkosh).